A 194-amino-acid chain; its full sequence is Fe/S biogenesis protein NfuA (194 aa).

Residues Cys-152 and Cys-155 each coordinate [4Fe-4S] cluster.

Belongs to the NfuA family. In terms of assembly, homodimer. It depends on [4Fe-4S] cluster as a cofactor.

Involved in iron-sulfur cluster biogenesis. Binds a 4Fe-4S cluster, can transfer this cluster to apoproteins, and thereby intervenes in the maturation of Fe/S proteins. Could also act as a scaffold/chaperone for damaged Fe/S proteins. The sequence is that of Fe/S biogenesis protein NfuA from Stutzerimonas stutzeri (strain A1501) (Pseudomonas stutzeri).